A 1638-amino-acid polypeptide reads, in one-letter code: Non-structural polyprotein 1AB (1638 aa).

Residues 130–222 adopt a coiled-coil conformation; the sequence is LVHQVMEKTR…KEKENALVSV (93 aa). Helical transmembrane passes span 220 to 240, 379 to 398, 407 to 427, 437 to 457, 479 to 499, and 507 to 527; these read VSVGWDLLGWIVISVLVFGLI, VMSYRLDMWITSIFSLVLAG, APFIFVAWFLNIPVFLTCVAV, FILFQIFMPQFVLVNAFLLWL, ALVYTIGFVLWSLGLAVGVTL, and ILMFCVVAAAICGTKFACTTI. Residues H600, D632, and S697 each act as charge relay system; for serine protease activity in the active site. Residues 758–788 adopt a coiled-coil conformation; sequence KVSHAAILKELEELREEVQFLKKKCVTYDDY. O-(5'-phospho-RNA)-tyrosine is present on Y834. In terms of domain architecture, RdRp catalytic spans 1381 to 1515; that stretch reads RYFVEMDWTR…SIRKGFVEYE (135 aa).

The protein belongs to the astroviridae polyprotein 1AB family. As to quaternary structure, monomer. In terms of processing, cleaved by the viral and host proteases. The protease is probably autocatalytically cleaved.

The protein localises to the host membrane. The catalysed reaction is RNA(n) + a ribonucleoside 5'-triphosphate = RNA(n+1) + diphosphate. Its function is as follows. Responsible for the cleavage of the polyprotein into functional products. Functionally, protein covalently attached to the 5' extremity of the genomic and subgenomic RNAs. It may serve as a primer for the replicase. This is Non-structural polyprotein 1AB (ORF1) from Turkey astrovirus 2 (TAstV-2).